The chain runs to 486 residues: Glutamate--tRNA ligase 2 (486 aa).

Residues 12–22 (PSPTGELHIGN) carry the 'HIGH' region motif. Residues 252–256 (KLSKR) carry the 'KMSKS' region motif. Residue Lys-255 participates in ATP binding.

This sequence belongs to the class-I aminoacyl-tRNA synthetase family. Glutamate--tRNA ligase type 1 subfamily. As to quaternary structure, monomer.

The protein resides in the cytoplasm. The enzyme catalyses tRNA(Glu) + L-glutamate + ATP = L-glutamyl-tRNA(Glu) + AMP + diphosphate. Its function is as follows. Catalyzes the attachment of glutamate to tRNA(Glu) in a two-step reaction: glutamate is first activated by ATP to form Glu-AMP and then transferred to the acceptor end of tRNA(Glu). The protein is Glutamate--tRNA ligase 2 of Syntrophus aciditrophicus (strain SB).